The primary structure comprises 201 residues: uncharacterized protein (201 aa).

The N-terminal stretch at 1–25 (MYRAGVTLLVVAVVSLGRWDVVTMA) is a signal peptide. The Extracellular portion of the chain corresponds to 26 to 170 (AAIGIGWYEP…AYFRRSNHRA (145 aa)). Residues Asn-46, Asn-49, Asn-55, Asn-84, Asn-95, Asn-113, Asn-122, Asn-137, and Asn-144 are each glycosylated (N-linked (GlcNAc...) asparagine; by host). Residues 171–191 (FMIVILTQVVFVVFIINASFI) traverse the membrane as a helical segment. The Cytoplasmic portion of the chain corresponds to 192–201 (WSWTFRRHKR).

Belongs to the HHV-5 UL120 protein family.

Its subcellular location is the host membrane. This is an uncharacterized protein from Homo sapiens (Human).